A 416-amino-acid chain; its full sequence is Pectin acetylesterase 10 (416 aa).

Residues 1–20 (MRKLFLLGFIVAGLVLGNEA) form the signal peptide. Asn-27 is a glycosylation site (N-linked (GlcNAc...) asparagine). Residues Ser-198, Asp-294, and His-361 each act as charge relay system in the active site.

It belongs to the pectinacetylesterase family.

The protein localises to the secreted. The protein resides in the cell wall. In terms of biological role, hydrolyzes acetyl esters in homogalacturonan regions of pectin. In type I primary cell wall, galacturonic acid residues of pectin can be acetylated at the O-2 and O-3 positions. Decreasing the degree of acetylation of pectin gels in vitro alters their physical properties. This is Pectin acetylesterase 10 from Arabidopsis thaliana (Mouse-ear cress).